A 378-amino-acid chain; its full sequence is Erythronate-4-phosphate dehydrogenase (378 aa).

Substrate is bound by residues Ser45 and Thr66. NAD(+) is bound by residues Asp146 and Thr175. Residue Arg208 is part of the active site. Asp232 is a binding site for NAD(+). Glu237 is a catalytic residue. Catalysis depends on His254, which acts as the Proton donor. Gly257 is a binding site for NAD(+). Tyr258 provides a ligand contact to substrate.

The protein belongs to the D-isomer specific 2-hydroxyacid dehydrogenase family. PdxB subfamily. As to quaternary structure, homodimer.

The protein localises to the cytoplasm. The catalysed reaction is 4-phospho-D-erythronate + NAD(+) = (R)-3-hydroxy-2-oxo-4-phosphooxybutanoate + NADH + H(+). The protein operates within cofactor biosynthesis; pyridoxine 5'-phosphate biosynthesis; pyridoxine 5'-phosphate from D-erythrose 4-phosphate: step 2/5. Catalyzes the oxidation of erythronate-4-phosphate to 3-hydroxy-2-oxo-4-phosphonooxybutanoate. This chain is Erythronate-4-phosphate dehydrogenase, found in Shigella dysenteriae serotype 1 (strain Sd197).